A 275-amino-acid chain; its full sequence is Large ribosomal subunit protein uL2 (275 aa).

A disordered region spans residues Arg221–Lys275.

The protein belongs to the universal ribosomal protein uL2 family. In terms of assembly, part of the 50S ribosomal subunit. Forms a bridge to the 30S subunit in the 70S ribosome.

Functionally, one of the primary rRNA binding proteins. Required for association of the 30S and 50S subunits to form the 70S ribosome, for tRNA binding and peptide bond formation. It has been suggested to have peptidyltransferase activity; this is somewhat controversial. Makes several contacts with the 16S rRNA in the 70S ribosome. The chain is Large ribosomal subunit protein uL2 from Kosmotoga olearia (strain ATCC BAA-1733 / DSM 21960 / TBF 19.5.1).